Here is a 229-residue protein sequence, read N- to C-terminus: Probable calcium-binding protein CML22 (229 aa).

EF-hand domains are found at residues 53–88 (EGLR…LKLS), 89–124 (LSDE…IYLL), 145–180 (SIFD…EDYP), and 184–219 (SPSH…WVGL). Residues D66, D68, N70, T72, and E77 each coordinate Ca(2+).

Its function is as follows. Potential calcium sensor. The protein is Probable calcium-binding protein CML22 (CML22) of Arabidopsis thaliana (Mouse-ear cress).